A 245-amino-acid chain; its full sequence is MPAKLSVNLNAVAMLRNRRDLPWPSVTGLGRAALAAGAAGLTVHPRPDQRHIRFSDLGDIRALIDDEFPQAEFNIEGFPSEAFLDLVEKHQPEQVTLVPDDPTQATSDHGWDFVSRSDFLAPIVARLKAGGMRVSLFADPDPLGYERAAAIGVDRVELYTGPYGATYDDPAAATRELDRLEKAANAATALGLDINAGHDLTVDNLPALVKRIPQLSEVSIGHGLTADALMYGMPVTVSRYIAALA.

3-amino-2-oxopropyl phosphate is bound by residues Asn8 and Arg19. The active-site Proton acceptor is the His44. The 1-deoxy-D-xylulose 5-phosphate site is built by Arg46 and His51. Glu76 (proton acceptor) is an active-site residue. Residue Thr106 participates in 1-deoxy-D-xylulose 5-phosphate binding. The active-site Proton donor is the His198. Residues Asp199 and 221–222 (GH) each bind 3-amino-2-oxopropyl phosphate.

The protein belongs to the PNP synthase family. As to quaternary structure, homooctamer; tetramer of dimers.

It is found in the cytoplasm. It carries out the reaction 3-amino-2-oxopropyl phosphate + 1-deoxy-D-xylulose 5-phosphate = pyridoxine 5'-phosphate + phosphate + 2 H2O + H(+). The protein operates within cofactor biosynthesis; pyridoxine 5'-phosphate biosynthesis; pyridoxine 5'-phosphate from D-erythrose 4-phosphate: step 5/5. Functionally, catalyzes the complicated ring closure reaction between the two acyclic compounds 1-deoxy-D-xylulose-5-phosphate (DXP) and 3-amino-2-oxopropyl phosphate (1-amino-acetone-3-phosphate or AAP) to form pyridoxine 5'-phosphate (PNP) and inorganic phosphate. The polypeptide is Pyridoxine 5'-phosphate synthase (Brucella anthropi (strain ATCC 49188 / DSM 6882 / CCUG 24695 / JCM 21032 / LMG 3331 / NBRC 15819 / NCTC 12168 / Alc 37) (Ochrobactrum anthropi)).